The chain runs to 518 residues: MKRQIDYSLYLVTSSSLIAPGSTIERQVEEGILGGVTLVQHREKDISTKCFVERAKRLSEICKKYDVPFLINDRIDVALAVGADGVHIGQDDMDCALARKILGDDAIIGVSTNNIEEIEKAAADGADYVGIGSIYETNTKDVKDRLIGITGLRKILEHVSKMHCQLGTVAIAGLNSSNIQRVIYLSEANGKRIDGIALVSAIMCSITPRETAKELRNLIATPPCFAQARSSLTTPKDLLNQIPAALQKLKDFTPLIHHLTNAVAKNFSANVTLAAYGSPTMGESYDEVADFAKAPGALVLNIGILENTKTYIHAAQVNNDLARPVILDPVAVGATTARSKVINTLLNYAYYDIIKGNEGEIMNLAGEQGLMRGVDSISQHTLAARITAVHRLAVERRCVVAMSGAVDVISDGNSTYVIKNGNPLLGQITASGCSLGSVMGVTASICQNDKLLAAITATLLYNIASELAVEAKNSCGDLLVQGPGTFIPIFVDKLHQLINETIKGNVDWIERAKLEKAE.

A thiamine-phosphate synthase region spans residues 1 to 229 (MKRQIDYSLY…ATPPCFAQAR (229 aa)). Residues 40–44 (QHREK) and Asn72 each bind 4-amino-2-methyl-5-(diphosphooxymethyl)pyrimidine. The Mg(2+) site is built by Asp73 and Asp92. Ser111 lines the 4-amino-2-methyl-5-(diphosphooxymethyl)pyrimidine pocket. A 2-[(2R,5Z)-2-carboxy-4-methylthiazol-5(2H)-ylidene]ethyl phosphate-binding site is contributed by 137–139 (TNT). Residue Lys140 coordinates 4-amino-2-methyl-5-(diphosphooxymethyl)pyrimidine. Residues Gly173 and 199 to 200 (VS) each bind 2-[(2R,5Z)-2-carboxy-4-methylthiazol-5(2H)-ylidene]ethyl phosphate. Residues 230-518 (SSLTTPKDLL…IERAKLEKAE (289 aa)) form a hydroxyethylthiazole kinase region. 5-(2-hydroxyethyl)-4-methylthiazole is bound at residue Met281. Residues Lys355 and Ser403 each coordinate ATP. Position 430 (Ala430) interacts with 5-(2-hydroxyethyl)-4-methylthiazole. Residue Cys433 is the Proton acceptor; for hydroxyethylthiazole kinase activity of the active site.

It in the N-terminal section; belongs to the thiamine-phosphate synthase family. In the C-terminal section; belongs to the Thz kinase family. Mg(2+) serves as cofactor.

It carries out the reaction 2-[(2R,5Z)-2-carboxy-4-methylthiazol-5(2H)-ylidene]ethyl phosphate + 4-amino-2-methyl-5-(diphosphooxymethyl)pyrimidine + 2 H(+) = thiamine phosphate + CO2 + diphosphate. The enzyme catalyses 2-(2-carboxy-4-methylthiazol-5-yl)ethyl phosphate + 4-amino-2-methyl-5-(diphosphooxymethyl)pyrimidine + 2 H(+) = thiamine phosphate + CO2 + diphosphate. It catalyses the reaction 4-methyl-5-(2-phosphooxyethyl)-thiazole + 4-amino-2-methyl-5-(diphosphooxymethyl)pyrimidine + H(+) = thiamine phosphate + diphosphate. The catalysed reaction is 5-(2-hydroxyethyl)-4-methylthiazole + ATP = 4-methyl-5-(2-phosphooxyethyl)-thiazole + ADP + H(+). It functions in the pathway cofactor biosynthesis; thiamine diphosphate biosynthesis; 4-methyl-5-(2-phosphoethyl)-thiazole from 5-(2-hydroxyethyl)-4-methylthiazole: step 1/1. It participates in cofactor biosynthesis; thiamine diphosphate biosynthesis; thiamine phosphate from 4-amino-2-methyl-5-diphosphomethylpyrimidine and 4-methyl-5-(2-phosphoethyl)-thiazole: step 1/1. Functionally, condenses 4-methyl-5-(beta-hydroxyethyl)thiazole monophosphate (THZ-P) and 2-methyl-4-amino-5-hydroxymethyl pyrimidine pyrophosphate (HMP-PP) to form thiamine monophosphate (TMP). This Schizosaccharomyces pombe (strain 972 / ATCC 24843) (Fission yeast) protein is Probable thiamine biosynthetic bifunctional enzyme (thi4).